We begin with the raw amino-acid sequence, 726 residues long: MSTSDDIHNTTATGKCPFHQGGHDQSAGAGTTTRDWWPNQLRVDLLNQHSNRSNPLGEDFDYRKEFSKLDYYGLKKDLKALLTESQPWWPADWGSYAGLFIRMAWHGAGTYRSIDGRGGAGRGQQRFAPLNSWPDNVSLDKARRLLWPIKQKYGQKISWADLFILAGNVALENSGFRTFGFGAGREDVWEPDLDVNWGDEKAWLTHRHPEALAKAPLGATEMGLIYVNPEGPDHSGEPLSAAAAIRATFGNMGMNDEETVALIAGGHTLGKTHGAGPTSNVGPDPEAAPIEEQGLGWASTYGSGVGADAITSGLEVVWTQTPTQWSNYFFENLFKYEWVQTRSPAGAIQFEAVDAPEIIPDPFDPSKKRKPTMLVTDLTLRFDPEFEKISRRFLNDPQAFNEAFARAWFKLTHRDMGPKSRYIGPEVPKEDLIWQDPLPQPIYNPTEQDIIDLKFAIADSGLSVSELVSVAWASASTFRGGDKRGGANGARLALMPQRDWDVNAAAVRALPVLEKIQKESGKASLADIIVLAGVVGVEKAASAAGLSIHVPFAPGRVDARQDQTDIEMFELLEPIADGFRNYRARLDVSTTESLLIDKAQQLTLTAPEMTALVGGMRVLGANFDGSKNGVFTDRVGVLSNDFFVNLLDMRYEWKATDESKELFEGRDRETGEVKYTASRADLVFGSNSVLRAVAEVYASSDAHEKFVKDFVAAWVKVMNLDRFDLL.

The interval 1–33 is disordered; sequence MSTSDDIHNTTATGKCPFHQGGHDQSAGAGTTT. The segment at residues 105–226 is a cross-link (tryptophyl-tyrosyl-methioninium (Trp-Tyr) (with M-252)); the sequence is WHGAGTYRSI…LGATEMGLIY (122 aa). Residue His106 is the Proton acceptor of the active site. Positions 226 to 252 form a cross-link, tryptophyl-tyrosyl-methioninium (Tyr-Met) (with W-105); sequence YVNPEGPDHSGEPLSAAAAIRATFGNM. His267 serves as a coordination point for heme b.

Belongs to the peroxidase family. Peroxidase/catalase subfamily. In terms of assembly, homodimer or homotetramer. Heme b is required as a cofactor. Formation of the three residue Trp-Tyr-Met cross-link is important for the catalase, but not the peroxidase activity of the enzyme.

It carries out the reaction H2O2 + AH2 = A + 2 H2O. The catalysed reaction is 2 H2O2 = O2 + 2 H2O. Functionally, bifunctional enzyme with both catalase and broad-spectrum peroxidase activity. This Escherichia coli O157:H7 protein is Catalase-peroxidase 1.